Reading from the N-terminus, the 428-residue chain is Adenylosuccinate synthetase, chloroplastic (428 aa).

Residues 17–23 (GDEGKGK) and 45–47 (GHT) contribute to the GTP site. Aspartate 18 serves as the catalytic Proton acceptor. Positions 18 and 45 each coordinate Mg(2+). Residues 18–21 (DEGK), 43–46 (NAGH), threonine 135, arginine 149, asparagine 226, threonine 241, and arginine 305 contribute to the IMP site. Residue histidine 46 is the Proton donor of the active site. 301–307 (TTTGRPR) is a substrate binding site. GTP-binding positions include arginine 307, 333-335 (KLD), and 416-418 (GVG).

Belongs to the adenylosuccinate synthetase family. As to quaternary structure, homodimer. Mg(2+) is required as a cofactor.

The protein localises to the plastid. Its subcellular location is the chloroplast. It catalyses the reaction IMP + L-aspartate + GTP = N(6)-(1,2-dicarboxyethyl)-AMP + GDP + phosphate + 2 H(+). It participates in purine metabolism; AMP biosynthesis via de novo pathway; AMP from IMP: step 1/2. Plays an important role in the de novo pathway and in the salvage pathway of purine nucleotide biosynthesis. Catalyzes the first committed step in the biosynthesis of AMP from IMP. In Ostreococcus lucimarinus (strain CCE9901), this protein is Adenylosuccinate synthetase, chloroplastic.